The following is a 1250-amino-acid chain: MARGDAGRGRGLLALTFCLLAARGELLLPQETTVELSCGVGPLQVILGPEQAAVLNCSLGAAAAGPPTRVTWSKDGDTLLEHDHLHLLPNGSLWLSQPLAPNGSDESVPEAVGVIEGNYSCLAHGPLGVLASQTAVVKLATLADFSLHPESQTVEENGTARFECHIEGLPAPIITWEKDQVTLPEEPRLIVLPNGVLQILDVQESDAGPYRCVATNSARQHFSQEALLSVAHRGSLASTRGQDVVIVAAPENTTVVSGQSVVMECVASADPTPFVSWVRQDGKPISTDVIVLGRTNLLIANAQPWHSGVYVCRANKPRTRDFATAAAELRVLAAPAITQAPEALSRTRASTARFVCRASGEPRPALRWLHNGAPLRPNGRVKVQGGGGSLVITQIGLQDAGYYQCVAENSAGMACAAASLAVVVREGLPSAPTRVTATPLSSSAVLVAWERPEMHSEQIIGFSLHYQKARGMDNVEYQFAVNNDTTELQVRDLEPNTDYEFYVVAYSQLGASRTSTPALVHTLDDVPSAAPQLSLSSPNPSDIRVAWLPLPPSLSNGQVVKYKIEYGLGKEDQIFSTEVRGNETQLMLNSLQPNKVYRVRISAGTAAGFGAPSQWMHHRTPSMHNQSHVPFAPAELKVQAKMESLVVSWQPPPHPTQISGYKLYWREVGAEEEANGDRLPGGRGDQAWDVGPVRLKKKVKQYELTQLVPGRLYEVKLVAFNKHEDGYAAVWKGKTEKAPAPDMPIQRGPPLPPAHVHAESNSSTSIWLRWKKPDFTTVKIVNYTVRFSPWGLRNASLVTYYTSSGEDILIGGLKPFTKYEFAVQSHGVDMDGPFGSVVERSTLPDRPSTPPSDLRLSPLTPSTVRLHWCPPTEPNGEIVEYLILYSSNHTQPEHQWTLLTTQGNIFSAEVHGLESDTRYFFKMGARTEVGPGPFSRLQDVITLQEKLSDSLDMHSVTGIIVGVCLGLLCLLACMCAGLRRSPHRESLPGLSSTATPGNPALYSRARLGPPSPPAAHELESLVHPHPQDWSPPPSDVEDRAEVHSLMGGGVSEGRSHSKRKISWAQPSGLSWAGSWAGCELPQAGPRPALTRALLPPAGTGQTLLLQALVYDAIKGNGRKKSPPACRNQVEAEVIVHSDFSASNGNPDLHLQDLEPEDPLPPEAPDLISGVGDPGQGAAWLDRELGGCELAAPGPDRLTCLPEAASASCSYPDLQPGEVLEETPGDSCQLKSPCPLGASPGLPRSPVSSSA.

The first 24 residues, 1-24 (MARGDAGRGRGLLALTFCLLAARG), serve as a signal peptide directing secretion. The Extracellular segment spans residues 25-957 (ELLLPQETTV…SDSLDMHSVT (933 aa)). 4 consecutive Ig-like C2-type domains span residues 29 to 137 (PQET…TAVV), 143 to 229 (ADFS…ALLS), 242 to 330 (QDVV…AELR), and 335 to 421 (PAIT…ASLA). A disulfide bond links Cys-57 and Cys-121. Asn-90, Asn-102, and Asn-157 each carry an N-linked (GlcNAc...) asparagine glycan. The cysteines at positions 164 and 212 are disulfide-linked. Asn-252 carries an N-linked (GlcNAc...) asparagine glycan. 2 disulfide bridges follow: Cys-265–Cys-312 and Cys-356–Cys-405. Fibronectin type-III domains lie at 431 to 525 (APTR…TLDD), 527 to 623 (PSAA…TPSM), 632 to 741 (APAE…APAP), 752 to 845 (PPAH…TLPD), and 850 to 945 (PPSD…TLQE). Asn-582 carries an N-linked (GlcNAc...) asparagine glycan. Residues 958 to 978 (GIIVGVCLGLLCLLACMCAGL) traverse the membrane as a helical segment. Residues 979–1250 (RRSPHRESLP…LPRSPVSSSA (272 aa)) lie on the Cytoplasmic side of the membrane. Thr-995 is subject to Phosphothreonine. Disordered stretches follow at residues 1140 to 1175 (SASNGNPDLHLQDLEPEDPLPPEAPDLISGVGDPGQ) and 1215 to 1250 (PGEVLEETPGDSCQLKSPCPLGASPGLPRSPVSSSA).

Belongs to the immunoglobulin superfamily. DCC family.

It is found in the cell membrane. This is Immunoglobulin superfamily DCC subclass member 4 (IGDCC4) from Homo sapiens (Human).